A 372-amino-acid polypeptide reads, in one-letter code: Chaperone protein DnaJ (372 aa).

Residues 5-70 (DYYDVLGVER…QKRANYDQYG (66 aa)) form the J domain. The segment at 130–208 (GTTKDIQINT…CHGDGRVHKK (79 aa)) adopts a CR-type zinc-finger fold. The Zn(2+) site is built by C143, C146, C160, C163, C182, C185, C196, and C199. CXXCXGXG motif repeat units follow at residues 143–150 (CDSCDGSG), 160–167 (CSTCHGAG), 182–189 (CPSCHGSG), and 196–203 (CKSCHGDG).

It belongs to the DnaJ family. Homodimer. Requires Zn(2+) as cofactor.

The protein resides in the cytoplasm. Functionally, participates actively in the response to hyperosmotic and heat shock by preventing the aggregation of stress-denatured proteins and by disaggregating proteins, also in an autonomous, DnaK-independent fashion. Unfolded proteins bind initially to DnaJ; upon interaction with the DnaJ-bound protein, DnaK hydrolyzes its bound ATP, resulting in the formation of a stable complex. GrpE releases ADP from DnaK; ATP binding to DnaK triggers the release of the substrate protein, thus completing the reaction cycle. Several rounds of ATP-dependent interactions between DnaJ, DnaK and GrpE are required for fully efficient folding. Also involved, together with DnaK and GrpE, in the DNA replication of plasmids through activation of initiation proteins. The protein is Chaperone protein DnaJ of Pasteurella multocida (strain Pm70).